Here is a 185-residue protein sequence, read N- to C-terminus: Large ribosomal subunit protein uL22 (185 aa).

It belongs to the universal ribosomal protein uL22 family. As to quaternary structure, component of the large ribosomal subunit. Mature ribosomes consist of a small (40S) and a large (60S) subunit. The 40S subunit contains about 32 different proteins and 1 molecule of RNA (18S). The 60S subunit contains 45 different proteins and 3 molecules of RNA (25S, 5.8S and 5S).

The protein resides in the cytoplasm. Its function is as follows. Component of the ribosome, a large ribonucleoprotein complex responsible for the synthesis of proteins in the cell. The small ribosomal subunit (SSU) binds messenger RNAs (mRNAs) and translates the encoded message by selecting cognate aminoacyl-transfer RNA (tRNA) molecules. The large subunit (LSU) contains the ribosomal catalytic site termed the peptidyl transferase center (PTC), which catalyzes the formation of peptide bonds, thereby polymerizing the amino acids delivered by tRNAs into a polypeptide chain. The nascent polypeptides leave the ribosome through a tunnel in the LSU and interact with protein factors that function in enzymatic processing, targeting, and the membrane insertion of nascent chains at the exit of the ribosomal tunnel. This is Large ribosomal subunit protein uL22 from Candida albicans (strain SC5314 / ATCC MYA-2876) (Yeast).